The following is a 178-amino-acid chain: Cysteine protease inhibitor 7 (178 aa).

2 cysteine pairs are disulfide-bonded: cysteine 41-cysteine 93 and cysteine 141-cysteine 147.

It belongs to the protease inhibitor I3 (leguminous Kunitz-type inhibitor) family.

It is found in the vacuole. Its function is as follows. Inhibitor of cysteine proteases. May protect the plant by inhibiting proteases of invading organisms. In Solanum tuberosum (Potato), this protein is Cysteine protease inhibitor 7.